The chain runs to 91 residues: Late embryogenis abundant protein 2 (91 aa).

The interval 47 to 72 (KRAGEASSEKAPWVPDPKTGYYRPET) is disordered.

The protein belongs to the LEA type 3 family.

The protein resides in the cytoplasm. Its subcellular location is the nucleus. The polypeptide is Late embryogenis abundant protein 2 (Arabidopsis thaliana (Mouse-ear cress)).